The sequence spans 378 residues: Succinyl-diaminopimelate desuccinylase (378 aa).

His67 is a binding site for Zn(2+). The active site involves Asp69. Asp100 contributes to the Zn(2+) binding site. The active-site Proton acceptor is the Glu134. Zn(2+) is bound by residues Glu135, Glu163, and His349.

Belongs to the peptidase M20A family. DapE subfamily. As to quaternary structure, homodimer. Zn(2+) serves as cofactor. The cofactor is Co(2+).

The catalysed reaction is N-succinyl-(2S,6S)-2,6-diaminopimelate + H2O = (2S,6S)-2,6-diaminopimelate + succinate. Its pathway is amino-acid biosynthesis; L-lysine biosynthesis via DAP pathway; LL-2,6-diaminopimelate from (S)-tetrahydrodipicolinate (succinylase route): step 3/3. In terms of biological role, catalyzes the hydrolysis of N-succinyl-L,L-diaminopimelic acid (SDAP), forming succinate and LL-2,6-diaminopimelate (DAP), an intermediate involved in the bacterial biosynthesis of lysine and meso-diaminopimelic acid, an essential component of bacterial cell walls. The polypeptide is Succinyl-diaminopimelate desuccinylase (Pasteurella multocida (strain Pm70)).